A 181-amino-acid chain; its full sequence is Macro domain-containing protein in sno 5'region (181 aa).

One can recognise a Macro domain in the interval 1 to 172; sequence MTTITLVQGD…TFARELGDAG (172 aa).

Belongs to the MacroD-type family.

The chain is Macro domain-containing protein in sno 5'region from Streptomyces nogalater.